The chain runs to 1960 residues: [F-actin]-monooxygenase MICAL3 (1960 aa).

Residues 2 to 494 form a monooxygenase domain region; sequence EESKNEATNR…RHLYDTGDTK (493 aa). FAD-binding positions include Cys-97, 116 to 118, 123 to 125, Phe-183, Tyr-298, and Asp-398; these read EKR and RNN. A Calponin-homology (CH) domain is found at 518-624; it reads VARSSKLLGW…YLTQFYEMFK (107 aa). Residue Ser-649 is modified to Phosphoserine. The tract at residues 658–704 is disordered; that stretch reads GQTISRKRSPKDKKEKDLDGAGKRRKTSQSEEEDTPRGHRGARPTLV. The segment covering 669–679 has biased composition (basic and acidic residues); the sequence is DKKEKDLDGAG. 2 positions are modified to phosphoserine: Ser-685 and Ser-687. The LIM zinc-binding domain maps to 762-824; sequence DTCYFCQKRV…KPHYCYRLSG (63 aa). Residues Cys-764, Cys-767, His-785, Cys-788, Cys-791, Cys-794, Cys-814, and His-817 each coordinate Zn(2+). Disordered regions lie at residues 826-887 and 906-1295; these read AQRK…LRGT and LEEV…EALK. The residue at position 887 (Thr-887) is a Phosphothreonine. Ser-971 is modified (phosphoserine). Over residues 984–1014 the composition is skewed to acidic residues; that stretch reads GEEEEEDEEDEEEEEEEEDEEDEEEDEDESS. Composition is skewed to basic and acidic residues over residues 1039-1051 and 1072-1084; these read HWTH…EERA and DVDS…KGEA. Phosphoserine occurs at positions 1129, 1139, 1156, and 1188. Composition is skewed to pro residues over residues 1192-1203 and 1217-1233; these read SPLPEPSTPPAE and RTPP…PPTQ. Ser-1250 carries the phosphoserine modification. The residue at position 1252 (Thr-1252) is a Phosphothreonine. Ser-1254, Ser-1286, and Ser-1313 each carry phosphoserine. Residues 1277 to 1286 show a composition bias toward polar residues; the sequence is QGVTKDTLGS. 2 disordered regions span residues 1316–1550 and 1564–1782; these read LTPV…KRGL and RMRA…EEEL. The residue at position 1317 (Thr-1317) is a Phosphothreonine. Positions 1379–1393 are enriched in basic and acidic residues; the sequence is PDREPKGPREEHRDL. Residues 1394-1406 are compositionally biased toward low complexity; it reads SSSSGLGLQGSSS. Phosphoserine is present on Ser-1404. Residues 1407 to 1425 are compositionally biased toward polar residues; the sequence is RTRTPGSQSFNTSDSTMLT. At Thr-1425 the chain carries Phosphothreonine. Positions 1485–1503 are enriched in acidic residues; that stretch reads SVDEIPFADDVEDTYDDNT. Residues 1594–1611 are compositionally biased toward low complexity; the sequence is AAAAPRTPRTPAPRRATA. The segment covering 1616 to 1627 has biased composition (basic and acidic residues); that stretch reads GPEEPAPRHEAT. Positions 1633–1653 are enriched in low complexity; it reads SPPSDSGGPDGSVTSSEGSSG. A compositionally biased stretch (basic residues) spans 1654-1672; that stretch reads KSKKRSSLFSPRRSKKEKK. Phosphoserine is present on residues Ser-1660 and Ser-1663. Residues 1718 to 1727 are compositionally biased toward polar residues; the sequence is CPSTPSSGTT. Residues 1762–1778 are compositionally biased toward basic and acidic residues; the sequence is VLERTSQKSRKEPRTYT. Positions 1779–1952 form a coiled coil; that stretch reads EEELNAKLTR…DKDLEAAMLS (174 aa). The 150-residue stretch at 1799–1948 folds into the bMERB domain; the sequence is KQEELKRLHR…EKEEDKDLEA (150 aa). Ser-1870 bears the Phosphoserine mark.

It belongs to the Mical family. Interacts with RAB1B, RAB8A, RAB10, RAB13 and RAB15 (in their GTP-bound forms); binding to RAB1B is of low affinity compared to other Rab proteins; at least in case of RAB8A can bind 2 molecules of RAB8A simultaneously through a high and a low affinity binding site, respectively. Interacts with ERC1 and RAB8A; may bridge ERC1 with RAB8A. Interacts with KIF23 and ERC1; enhances the interaction between KIF23 and ERC1. Interacts with NINL. The cofactor is FAD.

It localises to the cytoplasm. The protein localises to the cell cortex. The protein resides in the cytoskeleton. Its subcellular location is the nucleus. It is found in the midbody. It localises to the spindle. The protein localises to the cilium basal body. The catalysed reaction is L-methionyl-[F-actin] + NADPH + O2 + H(+) = L-methionyl-(R)-S-oxide-[F-actin] + NADP(+) + H2O. In terms of biological role, monooxygenase that promotes depolymerization of F-actin by mediating oxidation of specific methionine residues on actin to form methionine-sulfoxide, resulting in actin filament disassembly and preventing repolymerization. In the absence of actin, it also functions as a NADPH oxidase producing H(2)O(2). Seems to act as Rab effector protein and play a role in vesicle trafficking. Involved in exocytic vesicles tethering and fusion: the monooxygenase activity is required for this process and implicates RAB8A associated with exocytotic vesicles. Required for cytokinesis. Contributes to stabilization and/or maturation of the intercellular bridge independently of its monooxygenase activity. Promotes recruitment of Rab8 and ERC1 to the intercellular bridge, and together these proteins are proposed to function in timely abscission. The protein is [F-actin]-monooxygenase MICAL3 (MICAL3) of Bos taurus (Bovine).